Consider the following 219-residue polypeptide: Small ribosomal subunit protein uS3c (219 aa).

Positions Ile39–Lys109 constitute a KH type-2 domain.

The protein belongs to the universal ribosomal protein uS3 family. Part of the 30S ribosomal subunit.

It is found in the plastid. It localises to the cyanelle. This is Small ribosomal subunit protein uS3c (rps3) from Cyanophora paradoxa.